The sequence spans 1943 residues: MEENESQKCEPCLPYSADRRQMQEQGKGNLHVTSPEDAECRRTKERLSNGNSRGSVSKSSRNIPRRHTLGGPRSSKEILGMQTSEMDRKREAFLEHLKQKYPHHASAIMGHQERLRDQTRSPKLSHSPQPPSLGDPVEHLSETSADSLEAMSEGDAPTPFSRGSRTRASLPVVRSTNQTKERSLGVLYLQYGDETKQLRMPNEITSADTIRALFVSAFPQQLTMKMLESPSVAIYIKDESRNVYYELNDVRNIQDRSLLKVYNKDPAHAFNHTPKTMNGDMRMQRELVYARGDGPGAPRPGSTAHPPHAIPNSPPSTPVPHSMPPSPSRIPYGGTRSMVVPGNATIPRDRISSLPVSRPISPSPSAILERRDVKPDEDMSGKNIAMYRNEGFYADPYLYHEGRMSIASSHGGHPLDVPDHIIAYHRTAIRSASAYCNPSMQAEMHMEQSLYRQKSRKYPDSHLPTLGSKTPPASPHRVSDLRMIDMHAHYNAHGPPHTMQPDRASPSRQAFKKEPGTLVYIEKPRSAAGLSSLVDLGPPLMEKQVFAYSTATIPKDRETRERMQAMEKQIASLTGLVQSALFKGPITSYSKDASSEKMMKTTANRNHTDSAGTPHVSGGKMLSALESTVPPSQPPPVGTSAIHMSLLEMRRSVAELRLQLQQMRQLQLQNQELLRAMMKKAELEISGKVMETMKRLEDPVQRQRVLVEQERQKYLHEEEKIVKKLCELEDFVEDLKKDSTAASRLVTLKDVEDGAFLLRQVGEAVATLKGEFPTLQNKMRAILRIEVEAVRFLKEEPHKLDSLLKRVRSMTDVLTMLRRHVTDGLLKGTDAAQAAQYMAMEKATAAEVLKSQEEAAHTSGQPFHSTGAPGDAKSEVVPLSGMMVRHAQSSPVVIQPSQHSVALLNPAQNLPHVASSPAVPQEATSTLQMSQAPQSPQIPMNGSAMQSLFIEEIHSVSAKNRAVSIEKAEKKWEEKRQNLDHYNGKEFEKLLEEAQANIMKSIPNLEMPPATGPLPRGDAPVDKVELSEDSPNSEQDLEKLGGKSPPPPPPPPRRSYLPGSGLTTTRSGDVVYTGRKENITAKASSEDAGPSPQTRATKYPAEEPASAWTPSPPPVTTSSSKDEEEEEEEGDKIMAELQAFQKCSFMDVNSNSHAEPSRADSHVKDTRSGATVPPKEKKNLEFFHEDVRKSDVEYENGPQMEFQKVTTGAVRPSDPPKWERGMENSISDASRTSEYKTEIIMKENSISNMSLLRDSRNYSQETVPKASFGFSGISPLEDEINKGSKISGLQYSIPDTENQTLNYGKTKEMEKQNTDKCHVSSHTRLTESSVHDFKTEDQEVITTDFGQVVLRPKEARHANVNPNEDGESSSSSPTEENAATDNIAFMITETTVQVLSSGEVHDIVSQKGEDIQTVNIDARKEMTPRQEGTDNEDPVVCLDKKPVIIIFDEPMDIRSAYKRLSTIFEECDEELERMMMEEKIEEEEEEENGDSVVQNNNTSQMSHKKVAPGNLRTGQQVETKSQPHSLATETRNPGGQEMNRTELNKFSHVDSPNSECKGEDATDDQFESPKKKFKFKFPKKQLAALTQAIRTGTKTGKKTLQVVVYEEEEEDGTLKQHKEAKRFEIARSQPEDTPENTVRRQEQPSIESTSPISRTDEIRKNTYRTLDSLEQTIKQLENTISEMSPKALVDTSCSSNRDSVASSSHIAQEASPRPLLVPDEGPTALEPPTSIPSASRKGSSGAPQTSRMPVPMSAKNRPGTLDKPGKQSKLQDPRQYRQANGSAKKSGGDFKPTSPSLPASKIPALSPSSGKSSSLPSSSGDSSNLPNPPATKPSIASNPLSPQTGPPAHSASLIPSVSNGSLKFQSLTHTGKGHHLSFSPQSQNGRAPPPLSFSSSPPSPASSVSLNQGAKGTRTIHTPSLTSYKAQNGSSSKATPSTAKETS.

Disordered regions lie at residues 1–79 and 112–177; these read MEEN…KEIL and QERL…RSTN. The segment covering 38–47 has biased composition (basic and acidic residues); that stretch reads AECRRTKERL. The span at 48–62 shows a compositional bias: polar residues; that stretch reads SNGNSRGSVSKSSRN. Residue serine 169 is modified to Phosphoserine. Residue tyrosine 244 is modified to Phosphotyrosine. Residues 290–331 form a disordered region; the sequence is ARGDGPGAPRPGSTAHPPHAIPNSPPSTPVPHSMPPSPSRIP. Residues 308–328 are compositionally biased toward pro residues; the sequence is HAIPNSPPSTPVPHSMPPSPS. Serine 357 carries O-linked (GlcNAc) serine glycosylation. Phosphoserine occurs at positions 361 and 365. At tyrosine 393 the chain carries Phosphotyrosine. Residues 456 to 476 form a disordered region; it reads RKYPDSHLPTLGSKTPPASPH. Threonine 470 bears the Phosphothreonine mark. 2 positions are modified to phosphoserine: serine 474 and serine 526. 2 coiled-coil regions span residues 557–581 and 644–685; these read RETRERMQAMEKQIASLTGLVQSAL and MSLL…ELEI. A Phosphoserine modification is found at serine 809. Positions 848-874 are disordered; the sequence is VLKSQEEAAHTSGQPFHSTGAPGDAKS. Residues 957 to 985 are a coiled coil; the sequence is SAKNRAVSIEKAEKKWEEKRQNLDHYNGK. 3 disordered regions span residues 1003–1230, 1305–1329, and 1352–1377; these read PNLE…SDAS, KTKEMEKQNTDKCHVSSHTRLTESS, and PKEARHANVNPNEDGESSSSSPTEEN. Phosphoserine occurs at positions 1027, 1030, 1033, and 1044. Residues 1044 to 1053 are compositionally biased toward pro residues; sequence SPPPPPPPPR. 3 stretches are compositionally biased toward basic and acidic residues: residues 1155–1167, 1174–1192, and 1305–1318; these read EPSRADSHVKDTR, PKEKKNLEFFHEDVRKSDV, and KTKEMEKQNTDKCH. Positions 1368-1377 are enriched in polar residues; that stretch reads SSSSSPTEEN. Serine 1461 is subject to Phosphoserine. Positions 1464-1490 form a coiled coil; it reads FEECDEELERMMMEEKIEEEEEEENGD. Disordered regions lie at residues 1481-1572, 1606-1660, and 1677-1943; these read EEEE…PKKK, EEEE…EIRK, and ENTI…KETS. Polar residues-rich tracts occupy residues 1491–1501 and 1512–1533; these read SVVQNNNTSQM and RTGQQVETKSQPHSLATETRNP. Composition is skewed to basic and acidic residues over residues 1539 to 1548 and 1612 to 1625; these read NRTELNKFSH and GTLKQHKEAKRFEI. The span at 1643–1653 shows a compositional bias: polar residues; it reads QPSIESTSPIS. Residues 1656–1686 are a coiled coil; it reads DEIRKNTYRTLDSLEQTIKQLENTISEMSPK. Polar residues-rich tracts occupy residues 1691–1706 and 1731–1747; these read TSCSSNRDSVASSSHI and IPSASRKGSSGAPQTSR. Serine 1739 carries the post-translational modification Phosphoserine. Residues 1763 to 1775 show a composition bias toward basic and acidic residues; that stretch reads KPGKQSKLQDPRQ. The segment covering 1806–1825 has biased composition (low complexity); sequence SPSSGKSSSLPSSSGDSSNL. Polar residues-rich tracts occupy residues 1834–1843 and 1853–1869; these read SIASNPLSPQ and LIPSVSNGSLKFQSLTH. Serine 1841 is subject to Phosphoserine. Over residues 1892-1905 the composition is skewed to low complexity; it reads SFSSSPPSPASSVS. Residues serine 1896, serine 1899, and serine 1902 each carry the phosphoserine modification. The span at 1906-1943 shows a compositional bias: polar residues; that stretch reads LNQGAKGTRTIHTPSLTSYKAQNGSSSKATPSTAKETS.

In terms of assembly, interacts with CPNE4 (via VWFA domain).

It localises to the cytoplasm. The protein localises to the cytoskeleton. Its subcellular location is the microtubule organizing center. The protein resides in the centrosome. Its function is as follows. Required for normal development of intervertebral disks. The protein is Sickle tail protein homolog (KIAA1217) of Homo sapiens (Human).